Here is a 169-residue protein sequence, read N- to C-terminus: Chorion protein E1 (169 aa).

The first 19 residues, 1–19 (MAWFTTVLIVASLLGSLVA), serve as a signal peptide directing secretion. Tetradecapeptide repeat units lie at residues 114 to 127 (GAGRGAEMEGKPRS) and 128 to 141 (GAGKGAEMEGKPKS). Residues 119 to 169 (AEMEGKPRSGAGKGAEMEGKPKSTESVAETNTVAAGTGVVAEKTGTESSAS) are disordered. Positions 142 to 152 (TESVAETNTVA) are enriched in polar residues.

Functionally, this protein is one of two components of the prominent 'filler' that helps mold the shape of aeropyle crowns. This chain is Chorion protein E1, found in Antheraea polyphemus (Polyphemus moth).